A 541-amino-acid chain; its full sequence is MTKTVTRAGGASGPQQFQSGGETMKYEITRRRFLAASSAVLAAPAIVTMVRPARAGTTLTLGHGAAPGNPRTVAAAKFAELVAEKTAGRVTINVAGAETLGSDAAMLTSLRTGALDVTANSQGATSALVPELAALGLPFLFENTAKAMQVLGGPVGAELVKRFEAVGVVPLDWWDNGIRHLTNSKRKVAAPAEVSGMKIRTPADPMTMDIFQALGAATEQIAFGELYVALQQGVVDGQENPLANIDSSKLYEVNKYISLTGHKWESTPFLMSQIAQARLGGDLEAVKAAAKEAGELQRKLSADKDAEVLAAFRRISAIEVTEVDREGFAKATASVVESRRSPSGISSPRSNRQPKAEALSAREHPMKSLSNLVELTARAIVWFARQVVIFSGIALMVFMTANVAARYVLAGGGFSFAQELPVLIFPWFILGGIVLAAHSGGHMAVEWIYDKLRDGARSTAFVAANLVSAGAFLMLGYQAYLVGEIAGIEHSPVLQLPNSVGYFALAVGSVLVAIVTLAVALRVLRLGWDHRTNTESGEVAL.

Residues 1-55 (MTKTVTRAGGASGPQQFQSGGETMKYEITRRRFLAASSAVLAAPAIVTMVRPARA) constitute a signal peptide (tat-type signal). Residues 339-362 (RRSPSGISSPRSNRQPKAEALSAR) are disordered. The segment covering 341–351 (SPSGISSPRSN) has biased composition (low complexity). 4 consecutive transmembrane segments (helical) span residues 379–399 (AIVW…MVFM), 420–440 (LPVL…AHSG), 466–486 (LVSA…GEIA), and 500–520 (VGYF…LAVA).

Belongs to the bacterial solute-binding protein 7 family. In terms of processing, predicted to be exported by the Tat system. The position of the signal peptide cleavage has not been experimentally proven.

The protein resides in the cell membrane. This is an uncharacterized protein from Sinorhizobium fredii (strain NBRC 101917 / NGR234).